Reading from the N-terminus, the 757-residue chain is Voltage-gated potassium channel KCNC3 (757 aa).

The interval 1 to 78 (MLSSVCVSSF…CPGLPAAAMG (78 aa)) is important for normal N-type inactivation. The interval 1–87 (MLSSVCVSSF…GRHGGGGGDS (87 aa)) is disordered. Residues 1–290 (MLSSVCVSSF…EDPYSSRAAR (290 aa)) lie on the Cytoplasmic side of the membrane. Over residues 21 to 40 (PAPPPQPPESPPPPPLPPQQ) the composition is skewed to pro residues. Low complexity predominate over residues 41-52 (QQPAQPGPAASP). Histidine 157, cysteine 163, cysteine 184, and cysteine 185 together coordinate Zn(2+). A compositionally biased stretch (low complexity) spans 210 to 219 (AANAANAAGA). The interval 210 to 232 (AANAANAAGAHDGGLDDEAGAGG) is disordered. A helical transmembrane segment spans residues 291-309 (YVAFASLFFILISITTFCL). N-linked (GlcNAc...) asparagine glycosylation is found at asparagine 320 and asparagine 336. A helical membrane pass occupies residues 351-370 (VEGVCVVWFTFEFLMRITFC). Over 371-379 (PDKVEFLKS) the chain is Cytoplasmic. The helical transmembrane segment at 380 to 398 (SLNIIDCVAILPFYLEVGL) threads the bilayer. Residues 412–434 (FLRVVRFVRILRIFKLTRHFVGL) traverse the membrane as a helical; Voltage-sensor segment. The Cytoplasmic segment spans residues 435–447 (RVLGHTLRASTNE). A helical transmembrane segment spans residues 448-469 (FLLLIIFLALGVLIFATMIYYA). A glycan (N-linked (GlcNAc...) asparagine) is linked at asparagine 483. 4 residues coordinate K(+): threonine 503, leucine 504, glycine 505, and tyrosine 506. Positions 503–508 (TLGYGD) match the Selectivity filter motif. A helical membrane pass occupies residues 518–539 (LVGALCALAGVLTIAMPVPVIV). At 540–757 (NNFGMYYSLA…NANAAAWISP (218 aa)) the chain is on the cytoplasmic side. Positions 556–613 (PKKKNKHIPRPPQPGSPNYCKPDPPPPPPPHPHHGSGGISPPPPITPPSMGVTVAGAY) are disordered. Arginine 625 carries the post-translational modification Omega-N-methylarginine. Residues 682–746 (QPAMSPEDKS…KPGPPSFLPD (65 aa)) are disordered. Residues serine 686 and serine 691 each carry the phosphoserine modification. Residues 728 to 743 (PPLPPQDWRKPGPPSF) show a composition bias toward pro residues.

It belongs to the potassium channel family. C (Shaw) (TC 1.A.1.2) subfamily. Kv3.3/KCNC3 sub-subfamily. As to quaternary structure, homotetramer. Heterotetramer with KCNC1. Interacts (via C-terminus) with HAX1; this interaction modulates channel gating. Identified in a complex with ACTR3, a subunit of the Arp2/3 complex; this interaction is indirect and depends on the presence of HAX1. N-glycosylated.

Its subcellular location is the cell membrane. It is found in the presynaptic cell membrane. The protein localises to the perikaryon. The protein resides in the cell projection. It localises to the axon. Its subcellular location is the dendrite. It is found in the dendritic spine membrane. The protein localises to the cytoplasm. The protein resides in the cell cortex. It localises to the cytoskeleton. The catalysed reaction is K(+)(in) = K(+)(out). Voltage-gated potassium channel that plays an important role in the rapid repolarization of fast-firing brain neurons. The channel opens in response to the voltage difference across the membrane, forming a potassium-selective channel through which potassium ions pass in accordance with their electrochemical gradient. The channel displays rapid activation and inactivation kinetics. It plays a role in the regulation of the frequency, shape and duration of action potentials in Purkinje cells. Required for normal survival of cerebellar neurons, probably via its role in regulating the duration and frequency of action potentials that in turn regulate the activity of voltage-gated Ca(2+) channels and cellular Ca(2+) homeostasis. Required for normal motor function. Plays a role in the reorganization of the cortical actin cytoskeleton and the formation of actin veil structures in neuronal growth cones via its interaction with HAX1 and the Arp2/3 complex. This chain is Voltage-gated potassium channel KCNC3 (KCNC3), found in Homo sapiens (Human).